A 38-amino-acid polypeptide reads, in one-letter code: Large ribosomal subunit protein bL36 (38 aa).

The protein belongs to the bacterial ribosomal protein bL36 family.

This is Large ribosomal subunit protein bL36 from Streptococcus agalactiae serotype III (strain NEM316).